The sequence spans 209 residues: Molybdenum cofactor guanylyltransferase (209 aa).

Residues leucine 14–glycine 16, lysine 31, and aspartate 104 each bind GTP. Aspartate 104 provides a ligand contact to Mg(2+).

The protein belongs to the MobA family. In terms of assembly, monomer. Mg(2+) is required as a cofactor.

The protein resides in the cytoplasm. The catalysed reaction is Mo-molybdopterin + GTP + H(+) = Mo-molybdopterin guanine dinucleotide + diphosphate. Functionally, transfers a GMP moiety from GTP to Mo-molybdopterin (Mo-MPT) cofactor (Moco or molybdenum cofactor) to form Mo-molybdopterin guanine dinucleotide (Mo-MGD) cofactor. This chain is Molybdenum cofactor guanylyltransferase, found in Helicobacter pylori (strain J99 / ATCC 700824) (Campylobacter pylori J99).